Consider the following 202-residue polypeptide: Ras-related protein Rab-1A (202 aa).

Residues 15–23 (GDSGVGKSC), 33–40 (YSESFIST), 63–67 (DTAGQ), 121–124 (NKSD), and 151–153 (SAK) each bind GTP. Residues 37-45 (FISTIGVDF) carry the Effector region motif. The segment at 180-202 (QTVDKNKVVPGSSAPISPKSGCC) is disordered. Residues Cys201 and Cys202 are each lipidated (S-geranylgeranyl cysteine).

The protein belongs to the small GTPase superfamily. Rab family.

The protein resides in the cell membrane. The polypeptide is Ras-related protein Rab-1A (rab1A) (Dictyostelium discoideum (Social amoeba)).